Consider the following 61-residue polypeptide: Putative neurotoxin-A (61 aa).

The signal sequence occupies residues 1 to 19; the sequence is MKTVCGVFMVLLALTVLLA. 3 disulfide bridges follow: Cys-31–Cys-50, Cys-36–Cys-55, and Cys-40–Cys-57.

It belongs to the short scorpion toxin superfamily. Expressed by the venom gland.

It localises to the secreted. The chain is Putative neurotoxin-A from Lychas mucronatus (Chinese swimming scorpion).